Reading from the N-terminus, the 1538-residue chain is Dicer-like protein 1 (1538 aa).

Residues 39-72 are disordered; sequence DPAESSADVHKDEHSSDNSDNDNEAVPKPNDFSQ. The span at 45-55 shows a compositional bias: basic and acidic residues; the sequence is ADVHKDEHSSD. Residues 134 to 315 form the Helicase ATP-binding domain; it reads LFERAKTQNT…EAATRLETLL (182 aa). 147-154 contributes to the ATP binding site; the sequence is LDTGSGKT. A DEAH box motif is present at residues 260 to 263; sequence DEAH. The 160-residue stretch at 460–619 folds into the Helicase C-terminal domain; that stretch reads ELSKHFSDTT…ETLPEDRILH (160 aa). Positions 652–742 constitute a Dicer dsRNA-binding fold domain; it reads AIAILARYAS…NSIYHRRLPA (91 aa). Residues 892–1020 form the PAZ domain; the sequence is DTVSFVHNND…ICAEPLRISA (129 aa). 2 RNase III domains span residues 1044-1203 and 1254-1406; these read IALE…LSGG and ARHV…VDSK. Residues Glu1295, Asp1392, and Glu1395 each coordinate Mg(2+). Residues 1440–1508 enclose the DRBM domain; that stretch reads TFLHNKLTNE…SEKALAVLDG (69 aa). Residues Cys1452, His1479, Cys1520, and Cys1522 each contribute to the Zn(2+) site.

The protein belongs to the helicase family. Dicer subfamily. Mg(2+) is required as a cofactor. It depends on Mn(2+) as a cofactor.

Its function is as follows. Dicer-like endonuclease involved in cleaving double-stranded RNA in the RNA interference (RNAi) pathway. Produces 21 to 25 bp dsRNAs (siRNAs) which target the selective destruction of homologous RNAs leading to sequence-specific suppression of gene expression, called post-transcriptional gene silencing (PTGS). Part of a broad host defense response against viral infection and transposons. The protein is Dicer-like protein 1 (dcl1) of Neosartorya fischeri (strain ATCC 1020 / DSM 3700 / CBS 544.65 / FGSC A1164 / JCM 1740 / NRRL 181 / WB 181) (Aspergillus fischerianus).